Here is a 477-residue protein sequence, read N- to C-terminus: Ubiquinone biosynthesis monooxygenase COQ6, mitochondrial (477 aa).

Residues Met1–Leu25 constitute a mitochondrion transit peptide.

Belongs to the UbiH/COQ6 family. In terms of assembly, component of a multi-subunit COQ enzyme complex. FAD is required as a cofactor.

Its subcellular location is the mitochondrion inner membrane. It carries out the reaction a 4-hydroxy-3-(all-trans-polyprenyl)benzoate + 2 reduced [2Fe-2S]-[ferredoxin] + O2 + 2 H(+) = a 3,4-dihydroxy-5-(all-trans-polyprenyl)benzoate + 2 oxidized [2Fe-2S]-[ferredoxin] + H2O. The enzyme catalyses a 2-methoxy-6-(all-trans-polyprenyl)phenol + 2 reduced [2Fe-2S]-[ferredoxin] + O2 + 2 H(+) = a 2-methoxy-6-(all-trans-polyprenyl)benzene-1,4-diol + 2 oxidized [2Fe-2S]-[ferredoxin] + H2O. The protein operates within cofactor biosynthesis; ubiquinone biosynthesis. FAD-dependent monooxygenase required for two non-consecutive steps during ubiquinone biosynthesis. Required for the C5-ring hydroxylation during ubiquinone biosynthesis by catalyzing the hydroxylation of 4-hydroxy-3-(all-trans-polyprenyl)benzoic acid to 3,4-dihydroxy-5-(all-trans-polyprenyl)benzoic acid. Also acts downstream of coq4, for the C1-hydroxylation during ubiquinone biosynthesis by catalyzing the hydroxylation of 2-methoxy-6-(all-trans-polyprenyl)phenol to 2-methoxy-6-(all-trans-polyprenyl)benzene-1,4-diol. The electrons required for the hydroxylation reaction are funneled indirectly to Coq6 from NADPH via a ferredoxin/ferredoxin reductase system. This Drosophila melanogaster (Fruit fly) protein is Ubiquinone biosynthesis monooxygenase COQ6, mitochondrial.